Here is a 134-residue protein sequence, read N- to C-terminus: Ribonuclease VapC2 (134 aa).

The 122-residue stretch at tyrosine 3–isoleucine 124 folds into the PINc domain. Residue aspartate 6 coordinates Mg(2+).

This sequence belongs to the PINc/VapC protein family. As to quaternary structure, forms complexes with VapB2; probably VapC2(4):VapB2(2) in the absence of DNA, and VapC2(4):VapB2(4) in the presence of DNA. Crystallizes as heterodimers with stoichiometry VapC2(4):VapB2(4) in the presence of its probable promoter DNA. The heterodimers are in contact via alternative VapC-VapC and VapB-VapB interactions. This subunit does not contact DNA. Mg(2+) is required as a cofactor.

Toxic component of a type II toxin-antitoxin (TA) system. Has ssRNase activity. Upon expression in E.coli or S.cerevisiae inhibits growth in liquid culture; in S.cerevisiae its expression leads to apoptosis-like characteristics. Rapidly induces apoptosis (within 2 hours) upon microinjection into mouse fibroblasts (L929 line); pretreatment of cells with dexamethasone protects them. Probably contributes to host cell death if bacterial cell lysis occurs during host infection. Its toxic effect is neutralized by coexpression with cognate antitoxin VapB2, its RNase activity is partially inhibited in vitro by VapB2. This is Ribonuclease VapC2 from Rickettsia felis (strain ATCC VR-1525 / URRWXCal2) (Rickettsia azadi).